Consider the following 208-residue polypeptide: dTTP/UTP pyrophosphatase (208 aa).

Residues 28–48 form a disordered region; that stretch reads DRIHPADIDETPQRAEHPRSL. The active-site Proton acceptor is aspartate 79.

This sequence belongs to the Maf family. YhdE subfamily. Requires a divalent metal cation as cofactor.

Its subcellular location is the cytoplasm. The catalysed reaction is dTTP + H2O = dTMP + diphosphate + H(+). The enzyme catalyses UTP + H2O = UMP + diphosphate + H(+). Nucleoside triphosphate pyrophosphatase that hydrolyzes dTTP and UTP. May have a dual role in cell division arrest and in preventing the incorporation of modified nucleotides into cellular nucleic acids. The chain is dTTP/UTP pyrophosphatase from Brucella abortus (strain 2308).